The primary structure comprises 56 residues: Small ribosomal subunit protein uS14 (56 aa).

The Zn(2+) site is built by C21, C24, C39, and C42.

It belongs to the universal ribosomal protein uS14 family. Component of the 40S small ribosomal subunit. Zn(2+) serves as cofactor.

It is found in the cytoplasm. Its subcellular location is the cytosol. The protein localises to the rough endoplasmic reticulum. Its function is as follows. Component of the small ribosomal subunit. The ribosome is a large ribonucleoprotein complex responsible for the synthesis of proteins in the cell. The sequence is that of Small ribosomal subunit protein uS14 (rps29) from Hippocampus comes (Tiger tail seahorse).